The following is a 214-amino-acid chain: MVVKLYGQVTAACPQRVLLCFLEKGIEFEIIHIDLDTFEQKKPEHLLRQPFGQVPAIEDGDFKLFESRAIARYYATKFADQGTNLLGKSLEHRAIVDQWADVETYYFNVLAQPLVINLIIKPRLGEKCDVVLVEDLKVKLGVVLDIYNNRLSSNRFLAGEEFTMADLTHMPAMGYLMSITDINQMVKARGSFNRWWEEISDRPSWKKLMVLAGH.

A GST N-terminal domain is found at Val2–Gly82. Glutathione contacts are provided by residues Ala11 to Ala12, Gln40 to Lys41, Gln53 to Val54, and Glu66 to Ser67. A GST C-terminal domain is found at Ser89–His214.

It belongs to the GST superfamily. Phi family.

It is found in the cytoplasm. The protein localises to the cytosol. The catalysed reaction is RX + glutathione = an S-substituted glutathione + a halide anion + H(+). In terms of biological role, involved in the transport and/or accumulation of both anthocyanins and proanthocyanidins (PA)s in the vacuole. Functions in the cytosol to maintain the regular accumulation in the vacuole of PA precursors, such as epicatechin and glycosylated epicatechin. The polypeptide is Glutathione S-transferase F12 (Arabidopsis thaliana (Mouse-ear cress)).